Here is a 444-residue protein sequence, read N- to C-terminus: MGFLTAAIRVSTSAASMLLRRKSRQLGFLASSSPLFSSFNSMNRTISSCNIVCKVLHKESLTRPMWNVSFLRSSSFHSTPARETGDDDISKSENSSSQDGDSCTKLKRKKLKGKRAVVRWLKFFRWKKKKEFERMTSEEKILNKLRKARKKEERLMETMKKLEPSESAETTHDPEILTPEEHFYYLKMGLKCKNYVPVGRRGIYQGVILNMHLHWKKHQTLQVVIKTFTPDEVKEIAVELARLTGGIVLDVHEGNTIIMYRGKNYVQPPTEIMSPRITLPRKKALDKSKCRDALRAVRKYIPRLEQELQLLQAQAETKRDYTNVKVDDNQERSEELKKIIERSEECLEDEQEEDEAGLELATDSDLSDIFETDSELEDAKTERPLFLEEFEKFPAINNREDEDFGDLGKAKSEGEENDDDKSPNFDEVDKMFLRAAFLLKKKRR.

The transit peptide at 1–72 directs the protein to the chloroplast; sequence MGFLTAAIRV…RPMWNVSFLR (72 aa). Residues 77-107 are disordered; sequence HSTPARETGDDDISKSENSSSQDGDSCTKLK. Residues 92–101 are compositionally biased toward polar residues; that stretch reads SENSSSQDGD. A CRM domain is found at 175 to 272; the sequence is EILTPEEHFY…KNYVQPPTEI (98 aa). Positions 292–355 form a coiled coil; sequence DALRAVRKYI…CLEDEQEEDE (64 aa). Disordered regions lie at residues 344 to 364 and 392 to 426; these read EECL…ATDS and KFPA…PNFD. A compositionally biased stretch (acidic residues) spans 346-357; that stretch reads CLEDEQEEDEAG. Basic and acidic residues predominate over residues 406–426; the sequence is DLGKAKSEGEENDDDKSPNFD.

The protein resides in the plastid. Its subcellular location is the chloroplast. This is an uncharacterized protein from Arabidopsis thaliana (Mouse-ear cress).